A 478-amino-acid chain; its full sequence is Sphingomyelin synthase-related protein 1 (478 aa).

Over residues 1-22 (MPAGSRAGSRLRSGSLPRPSRL) the composition is skewed to low complexity. Residues 1–65 (MPAGSRAGSR…TAEEVEKEMA (65 aa)) form a disordered region. Residues 75–141 (WTTKHVAVWL…MLSVRKLQKI (67 aa)) form the SAM domain. The next 6 helical transmembrane spans lie at 216–236 (ILSC…MVIV), 264–284 (FSMT…VLLL), 295–315 (LCSL…VTSL), 341–361 (AIWS…DYMF), 385–405 (FLHT…LAAH), and 410–430 (IDVF…HTLA). The Cytoplasmic segment spans residues 431–478 (NTRAYHQSRRARIWFPMFSFFECNVNGTVPNEYCWPFSKPAIMKRLIG).

This sequence belongs to the sphingomyelin synthase family. Expressed ubiquitously with highest levels in macrophages and testis.

Its subcellular location is the endoplasmic reticulum membrane. The catalysed reaction is an N-acylsphing-4-enine + a 1,2-diacyl-sn-glycero-3-phosphoethanolamine = an N-acylsphing-4-enine 1-phosphoethanolamine + a 1,2-diacyl-sn-glycerol. It catalyses the reaction an N-acylsphinganine + a 1,2-diacyl-sn-glycero-3-phosphoethanolamine = an N-acylsphinganine-1-phosphoethanolamine + a 1,2-diacyl-sn-glycerol. The enzyme catalyses an N-acyl-(4R)-4-hydroxysphinganine + a 1,2-diacyl-sn-glycero-3-phosphoethanolamine = an N-acyl-(4R)-4-hydroxysphinganine-1-phosphoethanolamine + a 1,2-diacyl-sn-glycerol. It carries out the reaction N-hexadecanoylsphinganine + a 1,2-diacyl-sn-glycero-3-phosphoethanolamine = N-hexadecanoyl-sphinganine-1-phosphoethanolamine + a 1,2-diacyl-sn-glycerol. The catalysed reaction is N-hexadecanoyl-(4R)-hydroxysphinganine + a 1,2-diacyl-sn-glycero-3-phosphoethanolamine = N-hexadecanoyl-(4R)-hydroxysphinganine-1-phosphoethanolamine + a 1,2-diacyl-sn-glycerol. Its pathway is sphingolipid metabolism. Its function is as follows. Synthesizes sphingolipids through transfer of a phosphatidyl head group from a glycerophospholipid on to the primary hydroxyl of a ceramide in the lumen of the endoplasmic reticulum. Catalyzes the synthesis of ceramide phosphoethanolamines (CPEs) (such as N-acylsphing-4-enine 1-phosphoethanolamine) by transferring phosphoethanolamine head group, which is smaller and more hydrophilic than the phosphocholine (PC) headgroup transferred in the canonical sphingomyelin synthesis (SMS) reaction by SMS1 or SMS2, from a phosphatidylethanolamine (1,2-diacyl-sn-glycero-3-phosphoethanolamine, PE) to a ceramide (such as N-acylsphing-4-enine). The larger PC prevents an efficient fit in the enzyme's catalytic pocket, leading to little or no SMS activity. In vitro, in the absence of ceramide, it has PLC activity with preference for phosphatidylinositol and phosphatidic acid, but also hydrolyzes phosphatidylethanolamine. This chain is Sphingomyelin synthase-related protein 1, found in Mus musculus (Mouse).